Reading from the N-terminus, the 368-residue chain is Agmatine deiminase (368 aa).

Cysteine 357 acts as the Amidino-cysteine intermediate in catalysis.

It belongs to the agmatine deiminase family. Homodimer.

The catalysed reaction is agmatine + H2O = N-carbamoylputrescine + NH4(+). Its pathway is amine and polyamine biosynthesis; putrescine biosynthesis via agmatine pathway; N-carbamoylputrescine from agmatine: step 1/1. Its function is as follows. Mediates the hydrolysis of agmatine into N-carbamoylputrescine in the arginine decarboxylase (ADC) pathway of putrescine biosynthesis, a basic polyamine. This chain is Agmatine deiminase, found in Ectopseudomonas mendocina (strain ymp) (Pseudomonas mendocina).